Consider the following 360-residue polypeptide: Ferredoxin--NADP reductase 1 (360 aa).

Residues aspartate 43, glutamine 51, tyrosine 56, alanine 96, phenylalanine 141, aspartate 307, and serine 348 each contribute to the FAD site.

Belongs to the ferredoxin--NADP reductase type 2 family. As to quaternary structure, homodimer. It depends on FAD as a cofactor.

It carries out the reaction 2 reduced [2Fe-2S]-[ferredoxin] + NADP(+) + H(+) = 2 oxidized [2Fe-2S]-[ferredoxin] + NADPH. This chain is Ferredoxin--NADP reductase 1, found in Cupriavidus taiwanensis (strain DSM 17343 / BCRC 17206 / CCUG 44338 / CIP 107171 / LMG 19424 / R1) (Ralstonia taiwanensis (strain LMG 19424)).